Here is a 303-residue protein sequence, read N- to C-terminus: N-acetyl-D-glucosamine kinase (303 aa).

ATP is bound by residues 4–11 (GFDIGGTK) and 133–140 (GVGGGLIF). Positions 157, 177, 179, and 184 each coordinate Zn(2+).

The protein belongs to the ROK (NagC/XylR) family. NagK subfamily.

The catalysed reaction is N-acetyl-D-glucosamine + ATP = N-acetyl-D-glucosamine 6-phosphate + ADP + H(+). It functions in the pathway cell wall biogenesis; peptidoglycan recycling. Functionally, catalyzes the phosphorylation of N-acetyl-D-glucosamine (GlcNAc) derived from cell-wall degradation, yielding GlcNAc-6-P. This Escherichia coli O157:H7 protein is N-acetyl-D-glucosamine kinase.